A 227-amino-acid polypeptide reads, in one-letter code: Ion-translocating oxidoreductase complex subunit E (227 aa).

5 helical membrane-spanning segments follow: residues 57–77 (LGLG…ISLF), 89–109 (IYVM…NAFA), 111–131 (PVYQ…IVIG), 146–166 (AFDG…LGAI), and 200–220 (GLLL…ILAV).

Belongs to the NqrDE/RnfAE family. The complex is composed of six subunits: RnfA, RnfB, RnfC, RnfD, RnfE and RnfG.

It localises to the cell inner membrane. In terms of biological role, part of a membrane-bound complex that couples electron transfer with translocation of ions across the membrane. This is Ion-translocating oxidoreductase complex subunit E from Haemophilus ducreyi (strain 35000HP / ATCC 700724).